The sequence spans 548 residues: uncharacterized protein (548 aa).

2 positions are modified to phosphoserine: Ser19 and Ser25. Thr47 is subject to Phosphothreonine.

This is an uncharacterized protein from Schizosaccharomyces pombe (strain 972 / ATCC 24843) (Fission yeast).